Here is a 540-residue protein sequence, read N- to C-terminus: MRVNNGLPPQELEAYGISNVHDIVYNPSYDLLYQEELDPSLTGYERGVLTNLGAVAVDTGIFTGRSPKDKYIVRDDTTRDTFWWADKGKGKNDNKPLSPETWQHLKGLVTRQLSGKRLFVVDAFCGANPDTRLSVRFITEVAWQAHFVKNMFIRPSDEELAGFKPDFIVMNGAKCTNPQWKEQGLNSENFVAFNLTERMQLIGGTWYGGEMKKGMFSMMNYLLPLKGIASMHCSANVGEKGDVAVFFGLSGTGKTTLSTDPKRRLIGDDEHGWDDDGVFNFEGGCYAKTIKLSKEAEPEIYNAIRRDALLENVTVREDGTIDFDDGSKTENTRVSYPIYHIDNIVKPVSKAGHATKVIFLTADAFGVLPPVSRLTADQTQYHFLSGFTAKLAGTERGITEPTPTFSACFGAAFLSLHPTQYAEVLVKRMQAAGAQAYLVNTGWNGTGKRISIKDTRAIIDAILNGSLDNAETFTLPMFNLAIPTELPGVDTKILDPRNTYASPEQWQEKAETLAKLFIDNFDKYTDTPAGAALVAAGPKL.

Arg65 serves as a coordination point for substrate. N6-acetyllysine is present on Lys87. Residues Tyr207 and Lys213 each contribute to the substrate site. Residues Lys213, His232, and 248–256 (GLSGTGKTT) each bind ATP. Mn(2+)-binding residues include Lys213 and His232. Asp269 lines the Mn(2+) pocket. ATP is bound by residues Glu297, Arg333, 449 to 450 (RI), and Thr455. Arg333 contributes to the substrate binding site. Lys523 carries the N6-acetyllysine modification.

It belongs to the phosphoenolpyruvate carboxykinase (ATP) family. Monomer. Requires Mn(2+) as cofactor.

The protein localises to the cytoplasm. The enzyme catalyses oxaloacetate + ATP = phosphoenolpyruvate + ADP + CO2. It functions in the pathway carbohydrate biosynthesis; gluconeogenesis. Its function is as follows. Involved in the gluconeogenesis. Catalyzes the conversion of oxaloacetate (OAA) to phosphoenolpyruvate (PEP) through direct phosphoryl transfer between the nucleoside triphosphate and OAA. The polypeptide is Phosphoenolpyruvate carboxykinase (ATP) (Shigella flexneri).